The primary structure comprises 318 residues: ATP phosphoribosyltransferase regulatory subunit (318 aa).

Belongs to the class-II aminoacyl-tRNA synthetase family. HisZ subfamily. In terms of assembly, heteromultimer composed of HisG and HisZ subunits.

It is found in the cytoplasm. It functions in the pathway amino-acid biosynthesis; L-histidine biosynthesis; L-histidine from 5-phospho-alpha-D-ribose 1-diphosphate: step 1/9. Functionally, required for the first step of histidine biosynthesis. May allow the feedback regulation of ATP phosphoribosyltransferase activity by histidine. The polypeptide is ATP phosphoribosyltransferase regulatory subunit (Lactococcus lactis subsp. cremoris (strain SK11)).